The primary structure comprises 73 residues: Large ribosomal subunit protein uL24 (73 aa).

The span at 53–65 shows a compositional bias: basic and acidic residues; the sequence is NPKGGFIKKEKPM. Positions 53 to 73 are disordered; it reads NPKGGFIKKEKPMHISNVKKA.

It belongs to the universal ribosomal protein uL24 family. As to quaternary structure, part of the 50S ribosomal subunit.

Its function is as follows. One of two assembly initiator proteins, it binds directly to the 5'-end of the 23S rRNA, where it nucleates assembly of the 50S subunit. Functionally, one of the proteins that surrounds the polypeptide exit tunnel on the outside of the subunit. The sequence is that of Large ribosomal subunit protein uL24 from Helicobacter pylori (strain J99 / ATCC 700824) (Campylobacter pylori J99).